The sequence spans 383 residues: Delta(12) fatty acid desaturase FAD2 (383 aa).

A disordered region spans residues 1–29 (MGAGGRMQDPTNGGNKTEPEPIQRVPHEK). The span at 17-29 (TEPEPIQRVPHEK) shows a compositional bias: basic and acidic residues. 2 helical membrane passes run 50–70 (VIRSFSYVFYDLTIASILYYI) and 85–105 (VAWPVYWAVQGCVLTGVWVIA). A Histidine box-1 motif is present at residues 106-110 (HECGH). The helical transmembrane segment at 118-138 (WLDDTVGLVLHSFLLVPYFSW) threads the bilayer. A Histidine box-2 motif is present at residues 142–146 (HRRHH). The next 3 helical transmembrane spans lie at 180-200 (ILTLLVTLTLGWPLYLTFNVS), 226-246 (IFISDAGILAVVFVLFRLAMT), and 252-272 (VLTMYGGPLLVVNGFLVLITF). The Histidine box-3 signature appears at 316-320 (HVAHH).

The protein belongs to the fatty acid desaturase type 1 family. Expressed in leaves, flower buds and developing seeds.

It localises to the membrane. It functions in the pathway lipid metabolism; polyunsaturated fatty acid biosynthesis. Catalyzes the desaturation of oleic acid to linoleic acid. Introduces a double bond at position 12 of 16:1(9Z) and 18:1(9Z). This chain is Delta(12) fatty acid desaturase FAD2, found in Calendula officinalis (Pot marigold).